A 207-amino-acid chain; its full sequence is Acyl-homoserine-lactone synthase (207 aa).

The protein belongs to the autoinducer synthase family.

It carries out the reaction a fatty acyl-[ACP] + S-adenosyl-L-methionine = an N-acyl-L-homoserine lactone + S-methyl-5'-thioadenosine + holo-[ACP] + H(+). Functionally, required for the synthesis of N-butanoyl-L-homoserine lactone (BHL), an autoinducer molecule which binds to AsaR. In Aeromonas salmonicida, this protein is Acyl-homoserine-lactone synthase (asaI).